The following is a 247-amino-acid chain: uncharacterized protein (247 aa).

2 consecutive transmembrane segments (helical) span residues 11-31 (LIAPPLNTFVLLIIAAIIYCV) and 39-59 (FIAIISFTWLYIMSAPFTGLL).

The protein localises to the cell membrane. This is an uncharacterized protein from Haemophilus influenzae (strain ATCC 51907 / DSM 11121 / KW20 / Rd).